Here is a 147-residue protein sequence, read N- to C-terminus: Mineralocorticoid receptor (147 aa).

One can recognise an NR LBD domain in the interval 1 to 147; sequence FALSWRSYKH…SQALKVEFPA (147 aa). The 21-hydroxyprogesterone site is built by Arg6 and Thr134. Residues Arg6 and Thr134 each contribute to the aldosterone site. Progesterone contacts are provided by Arg6 and Thr134.

Belongs to the nuclear hormone receptor family. NR3 subfamily.

It is found in the cytoplasm. It localises to the nucleus. Receptor for both mineralocorticoids (MC) such as aldosterone and glucocorticoids (GC) such as corticosterone or cortisol. Binds to mineralocorticoid response elements (MRE) and transactivates target genes. The effect of MC is to increase ion and water transport and thus raise extracellular fluid volume and blood pressure and lower potassium levels. The chain is Mineralocorticoid receptor (NR3C2) from Gallus gallus (Chicken).